A 500-amino-acid polypeptide reads, in one-letter code: MLSNARIIAAGCIAAGSLVAAGPCDIYSSGGTPCVAAHSTTRALFSAYTGPLYQVKRGSDGATTAISPLSSGVANAAAQDAFCAGTTCLITIIYDQSGRGNHLREAPPGGFSGPESNGYDNLASAIGAPVTLNGQKAYGVFVSPGTGYRNNAASGTAKGDAAEGMYAVLDGTHYNGACCFDYGNAETNSRDTGNGHMEAIYFGDSTVWGTGSGKGPWIMADLENGLFSGSSPGNNAGDPSISYRFVTAAIKGQPNQWAIRGGNAASGSLSTFYSGARPQVSGYNPMSKEGAIILGIGGDNSNGGQGTFYEGVMTSGYPSDATENSVQANIVAARYAVAPLTSGPALTVGSSISLRATTACCTTRYIAHSGSTVNTQVVSSSSATALKQQASWTVRAGLANNACFSFESQDTSGSYIRHSNFGLVLNANDGSKLFAEDATFCTQAGINGQGSSIRSWSYPTRYFRHYNNTLYIASNGGVHVFDATAAFNDDVSFVVSGGFA.

Residues 1 to 21 (MLSNARIIAAGCIAAGSLVAA) form the signal peptide. The N-linked (GlcNAc...) asparagine glycan is linked to Asn-467.

The protein belongs to the glycosyl hydrolase 54 family.

It carries out the reaction Hydrolysis of terminal non-reducing alpha-L-arabinofuranoside residues in alpha-L-arabinosides.. It catalyses the reaction Hydrolysis of (1-&gt;4)-beta-D-xylans, to remove successive D-xylose residues from the non-reducing termini.. In Trichoderma koningii (Hypocrea koningii), this protein is Arabinofuranosidase/B-xylosidase (xyl1).